Consider the following 713-residue polypeptide: Polyribonucleotide nucleotidyltransferase (713 aa).

Mg(2+) is bound by residues Asp493 and Asp499. Residues 560–619 enclose the KH domain; sequence PRMITIKINPEKIRDVIGKGGSVIRALTEETGTTIDISDDGVVTIASTNSEGMAEAKKRI. The 69-residue stretch at 629-697 folds into the S1 motif domain; sequence GHVYEGTVLK…EKGRVRLSAK (69 aa).

This sequence belongs to the polyribonucleotide nucleotidyltransferase family. Requires Mg(2+) as cofactor.

The protein resides in the cytoplasm. It catalyses the reaction RNA(n+1) + phosphate = RNA(n) + a ribonucleoside 5'-diphosphate. Functionally, involved in mRNA degradation. Catalyzes the phosphorolysis of single-stranded polyribonucleotides processively in the 3'- to 5'-direction. This is Polyribonucleotide nucleotidyltransferase from Burkholderia pseudomallei (strain 1106a).